A 196-amino-acid polypeptide reads, in one-letter code: GTP cyclohydrolase 1 (196 aa).

3 residues coordinate Zn(2+): Cys86, His89, and Cys158.

The protein belongs to the GTP cyclohydrolase I family. Homomer.

The catalysed reaction is GTP + H2O = 7,8-dihydroneopterin 3'-triphosphate + formate + H(+). It participates in cofactor biosynthesis; 7,8-dihydroneopterin triphosphate biosynthesis; 7,8-dihydroneopterin triphosphate from GTP: step 1/1. This Clostridium botulinum (strain Kyoto / Type A2) protein is GTP cyclohydrolase 1.